Reading from the N-terminus, the 223-residue chain is Deoxyribose-phosphate aldolase (223 aa).

Asp-89 serves as the catalytic Proton donor/acceptor. Catalysis depends on Lys-152, which acts as the Schiff-base intermediate with acetaldehyde. The Proton donor/acceptor role is filled by Lys-181.

This sequence belongs to the DeoC/FbaB aldolase family. DeoC type 1 subfamily.

The protein resides in the cytoplasm. It carries out the reaction 2-deoxy-D-ribose 5-phosphate = D-glyceraldehyde 3-phosphate + acetaldehyde. Its pathway is carbohydrate degradation; 2-deoxy-D-ribose 1-phosphate degradation; D-glyceraldehyde 3-phosphate and acetaldehyde from 2-deoxy-alpha-D-ribose 1-phosphate: step 2/2. Catalyzes a reversible aldol reaction between acetaldehyde and D-glyceraldehyde 3-phosphate to generate 2-deoxy-D-ribose 5-phosphate. In Bacillus cereus (strain ZK / E33L), this protein is Deoxyribose-phosphate aldolase.